The primary structure comprises 79 residues: MGSLSIWHWLIVLLIVALVFGTKKLRNIGGDLGGAVKGFKEGMKEADAPAAEAQQRELPRNGAVDVEAKEKTPRSGDYR.

Residues 1–21 (MGSLSIWHWLIVLLIVALVFG) traverse the membrane as a helical segment. Positions 46 to 79 (ADAPAAEAQQRELPRNGAVDVEAKEKTPRSGDYR) are disordered. Over residues 66–79 (VEAKEKTPRSGDYR) the composition is skewed to basic and acidic residues.

It belongs to the TatA/E family. As to quaternary structure, the Tat system comprises two distinct complexes: a TatABC complex, containing multiple copies of TatA, TatB and TatC subunits, and a separate TatA complex, containing only TatA subunits. Substrates initially bind to the TatABC complex, which probably triggers association of the separate TatA complex to form the active translocon.

It is found in the cell inner membrane. Part of the twin-arginine translocation (Tat) system that transports large folded proteins containing a characteristic twin-arginine motif in their signal peptide across membranes. TatA could form the protein-conducting channel of the Tat system. This is Sec-independent protein translocase protein TatA from Paraburkholderia phytofirmans (strain DSM 17436 / LMG 22146 / PsJN) (Burkholderia phytofirmans).